We begin with the raw amino-acid sequence, 356 residues long: Nicotinate-nucleotide--dimethylbenzimidazole phosphoribosyltransferase (356 aa).

The active-site Proton acceptor is the Glu317.

The protein belongs to the CobT family. In terms of assembly, homodimer.

The enzyme catalyses 5,6-dimethylbenzimidazole + nicotinate beta-D-ribonucleotide = alpha-ribazole 5'-phosphate + nicotinate + H(+). Its pathway is nucleoside biosynthesis; alpha-ribazole biosynthesis; alpha-ribazole from 5,6-dimethylbenzimidazole: step 1/2. Its function is as follows. Catalyzes the synthesis of alpha-ribazole-5'-phosphate from nicotinate mononucleotide (NAMN) and 5,6-dimethylbenzimidazole (DMB). This is Nicotinate-nucleotide--dimethylbenzimidazole phosphoribosyltransferase from Salmonella schwarzengrund (strain CVM19633).